The sequence spans 668 residues: MGGGVLKQQFVLHAPFLPCGDQPEAIRRLSQGITDGVPAQVLLGTTGSGKTFTMANVIANVNVPTLVLAHNKTLAAQLYQEFKAFFPENAVEYFISYYDYYQPEAYIARSDTYIEKSLLINDEIDKLRLSATRSILERRDTLIVSSISCIYGIGSPDNYSSMALTLEVGKEYPRSQLSSQLVRMHYQASSTPQRSAFRERGSVIDIFLAYESDLAVRLEFMNDTLISIEYVDPLTMIPSHTTSSITLYPGSHYVTPEAVREQAIRTIREELEQRMLFFEGRPVEQERLFQRTTHDIEMIKEIGFCKGIENYSRHFTGAAPGEPPTCLLDYFPDDFLLIIDESHQTLPQLRAMYRGDQSRKQSLVEYGFRLPSAFDNRPLTYEEARRYFHRVIYVSATPGDLEIQESRGHIIEQIIRPTGIPDPLPEIRPAKGQIDDLLEEIRQRLRKDQEKILVISVTKKLAEDIAAFLAELGIAATYLHSGIETAERTQILTDLRLGNIDVLIGVNLLREGIDLPEVSLVAILDADKEGFLRSSASLIQFCGRAARNIHGKVICYADRITPSMDHMLKETERRRKIQLDYNQQHKITPQPIIKPILANPITKEAGQEETRLKMQSSKELEASIKTYEEAMYQAAQEFQFDEAVKYRDLMNAAKKQLLFQKGEEENGD.

Positions 31 to 416 (QGITDGVPAQ…RGHIIEQIIR (386 aa)) constitute a Helicase ATP-binding domain. 44-51 (GTTGSGKT) is a binding site for ATP. The Beta-hairpin signature appears at 97 to 120 (YYDYYQPEAYIARSDTYIEKSLLI). A Helicase C-terminal domain is found at 433–596 (QIDDLLEEIR…ITPQPIIKPI (164 aa)). The region spanning 621–656 (EASIKTYEEAMYQAAQEFQFDEAVKYRDLMNAAKKQ) is the UVR domain.

Belongs to the UvrB family. As to quaternary structure, forms a heterotetramer with UvrA during the search for lesions. Interacts with UvrC in an incision complex.

Its subcellular location is the cytoplasm. The UvrABC repair system catalyzes the recognition and processing of DNA lesions. A damage recognition complex composed of 2 UvrA and 2 UvrB subunits scans DNA for abnormalities. Upon binding of the UvrA(2)B(2) complex to a putative damaged site, the DNA wraps around one UvrB monomer. DNA wrap is dependent on ATP binding by UvrB and probably causes local melting of the DNA helix, facilitating insertion of UvrB beta-hairpin between the DNA strands. Then UvrB probes one DNA strand for the presence of a lesion. If a lesion is found the UvrA subunits dissociate and the UvrB-DNA preincision complex is formed. This complex is subsequently bound by UvrC and the second UvrB is released. If no lesion is found, the DNA wraps around the other UvrB subunit that will check the other stand for damage. The chain is UvrABC system protein B from Chlamydia trachomatis serovar A (strain ATCC VR-571B / DSM 19440 / HAR-13).